A 484-amino-acid polypeptide reads, in one-letter code: Polyamine oxidase 3 (484 aa).

Positions 47, 55, 236, and 423 each coordinate FAD. A Microbody targeting signal motif is present at residues S482–L484.

It belongs to the flavin monoamine oxidase family. Requires FAD as cofactor. In terms of tissue distribution, widely expressed.

Its subcellular location is the peroxisome. It carries out the reaction spermine + O2 + H2O = 3-aminopropanal + spermidine + H2O2. The enzyme catalyses N(1)-acetylspermine + O2 + H2O = 3-acetamidopropanal + spermidine + H2O2. It catalyses the reaction norspermine + O2 + H2O = norspermidine + 3-aminopropanal + H2O2. The catalysed reaction is spermidine + O2 + H2O = 3-aminopropanal + putrescine + H2O2. It carries out the reaction thermospermine + O2 + H2O = 3-aminopropanal + spermidine + H2O2. It participates in amine and polyamine degradation; spermine degradation. The protein operates within amine and polyamine degradation; spermidine degradation. Its function is as follows. Flavoenzyme involved in polyamine back-conversion. Catalyzes the oxidation of the secondary amino group of polyamines, such as spermine, spermidine and their acetyl derivatives. Substrate preference is spermidine &gt; norspermine &gt; thermospermine &gt; N(1)-acetylspermine &gt; spermine. No activity detected when putrescine is used as substrate. Plays an important role in the regulation of polyamine intracellular concentration. The chain is Polyamine oxidase 3 from Oryza sativa subsp. japonica (Rice).